A 369-amino-acid chain; its full sequence is Anhydro-N-acetylmuramic acid kinase (369 aa).

12 to 19 provides a ligand contact to ATP; the sequence is GTSLDGVD.

This sequence belongs to the anhydro-N-acetylmuramic acid kinase family.

The catalysed reaction is 1,6-anhydro-N-acetyl-beta-muramate + ATP + H2O = N-acetyl-D-muramate 6-phosphate + ADP + H(+). Its pathway is amino-sugar metabolism; 1,6-anhydro-N-acetylmuramate degradation. It participates in cell wall biogenesis; peptidoglycan recycling. Catalyzes the specific phosphorylation of 1,6-anhydro-N-acetylmuramic acid (anhMurNAc) with the simultaneous cleavage of the 1,6-anhydro ring, generating MurNAc-6-P. Is required for the utilization of anhMurNAc either imported from the medium or derived from its own cell wall murein, and thus plays a role in cell wall recycling. This is Anhydro-N-acetylmuramic acid kinase from Escherichia coli O45:K1 (strain S88 / ExPEC).